A 965-amino-acid polypeptide reads, in one-letter code: Translation initiation factor IF-2 (965 aa).

The interval 94-375 is disordered; the sequence is RTFVRRDEAA…RGKHQESTTF (282 aa). Residues 104–115 are compositionally biased toward low complexity; sequence EQAAEATGNGQE. A compositionally biased stretch (basic and acidic residues) spans 121–177; it reads ELQRREEEARHEAELLEKQAQELKARQEQLAREEAERQAREQAAEAERRRAEEEAAK. Over residues 181 to 191 the composition is skewed to low complexity; sequence AAVAEAAAAAR. The segment covering 192-253 has biased composition (basic and acidic residues); it reads EQAEQERASQ…KAEAEARAIR (62 aa). Residues 267-276 are compositionally biased toward pro residues; the sequence is PEPPPKPAEA. The span at 303–320 shows a compositional bias: low complexity; that stretch reads KKPAPAAAAQPAATTQPA. Residues 351-364 are compositionally biased toward gly residues; the sequence is TSGGVDRGWRGGPK. A tr-type G domain is found at 465 to 634; that stretch reads PRPPVVTVMG…LLQAEVLELK (170 aa). Residues 474–481 form a G1 region; sequence GHVDHGKT. 474–481 is a GTP binding site; the sequence is GHVDHGKT. Positions 499 to 503 are G2; that stretch reads GITQH. Positions 520 to 523 are G3; that stretch reads DTPG. Residues 520 to 524 and 574 to 577 each bind GTP; these read DTPGH and NKID. The interval 574-577 is G4; the sequence is NKID. Residues 610 to 612 are G5; it reads SAK.

This sequence belongs to the TRAFAC class translation factor GTPase superfamily. Classic translation factor GTPase family. IF-2 subfamily.

It localises to the cytoplasm. Functionally, one of the essential components for the initiation of protein synthesis. Protects formylmethionyl-tRNA from spontaneous hydrolysis and promotes its binding to the 30S ribosomal subunits. Also involved in the hydrolysis of GTP during the formation of the 70S ribosomal complex. The polypeptide is Translation initiation factor IF-2 (Paraburkholderia phymatum (strain DSM 17167 / CIP 108236 / LMG 21445 / STM815) (Burkholderia phymatum)).